Consider the following 280-residue polypeptide: Thioesterase pynI (280 aa).

Positions 136 to 145 are enriched in acidic residues; that stretch reads LADDSDDEDN. Residues 136–167 are disordered; that stretch reads LADDSDDEDNRSDASDASDDGSTMSDEEEEDD.

This sequence belongs to the AMT4 thioesterase family.

Its pathway is secondary metabolite biosynthesis. In terms of biological role, thioesterase; part of the gene cluster that mediates the biosynthesis of pyranonigrins, a family of antioxidative compounds. The first step of pyranonigrins biosynthesis is performed by the hybrid PKS-NRPS synthetase that condenses 6 malonyl-CoA units to an acetyl starter unit, to form a 1,3,5-trioxotetradecane-6,8-dienyl-ACP. The enoyl reductase (ER) domain of pynA is likely to be functional during the first two rounds of polyketide chain extension, to generate the saturated C-C bonds of the alkyl side chain. PynA subsequently forms the amide bond between the acyl chain and L-serine. Although pynA has a terminal reductase domain, it appears to require the thioesterase pynI for the release of the straight-chain intermediate from pynA via the formation of a tetramic acid pyranonigrin J. The methyltransferase pynC then coverts pyranonigrin J to pyranonigrin I via N-methylation. The FAD-dependent monooxygenase pynG catalyzes an epoxidation-mediated cyclization to form the dihydro-gamma-pyrone moiety, followed by pynD-catalyzed oxidation of the alcohol to the ketone and enolization to yield the characteristic tetramic acid-fused gamma-pyrone core of pyranonigrin H. Pyranonigrin H is substrate of pynH for dehydration-mediated exo-methylene formation from the serine side chain to produce pyranonigrin E, before the oxidase pynE reduces the exo-methylene of pyranonigrin E into a pendant methyl to form pyranonigrin G. The FAD-linked oxidoreductase pynB performs the reverse reaction and converts pyranonigrin G back to pyranonigrin E. The chain is Thioesterase pynI from Aspergillus niger (strain ATCC MYA-4892 / CBS 513.88 / FGSC A1513).